The sequence spans 485 residues: Sphingosine kinase 1 (485 aa).

One can recognise a DAGKc domain in the interval 116–258 (GRPKKLLVFV…LDVATISQGT (143 aa)). ATP is bound by residues 126 to 128 (NPF) and threonine 158. 183–186 (SGDG) contributes to the substrate binding site. The active-site Proton donor/acceptor is aspartate 185. ATP contacts are provided by residues glutamate 190 and 215 to 217 (GSG). Aspartate 276 provides a ligand contact to substrate. Residues arginine 283, arginine 289, and 446-448 (DGE) contribute to the ATP site.

Requires Mg(2+) as cofactor. Highly expressed in stems and flowers and at lower levels in roots, leaves and siliques.

The protein localises to the vacuole membrane. The enzyme catalyses a sphingoid base + ATP = a sphingoid 1-phosphate + ADP + H(+). With respect to regulation, activated by phosphatidic acid (PA). Binding with PA stimulates the activity by promoting the binding of substrate to the catalytic site. Involved in the production of sphingolipid metabolites. Phosphorylates sphingosine and various sphingoid long-chain base (LCB) products, such as phytosphingosine (PHS, 4-hydroxysphinganine), 4-hydroxy-8-sphingenine, 4,8-sphingadienine, D-erythro-dihydrosphingosine and D,L-threo-dihydrosphingosine. Is required for abscisic acid (ABA) signaling that mediates stomatal closure, inhibition of seed germination and root elongation. May function upstream of PLDALPHA1 and phosphatidic acid (PA) in an amplification response to ABA that mediates stomatal closure. The polypeptide is Sphingosine kinase 1 (SPHK1) (Arabidopsis thaliana (Mouse-ear cress)).